The chain runs to 861 residues: Probable beta-glucosidase A (861 aa).

The N-terminal stretch at 1–19 is a signal peptide; it reads MKLSILEAAALTAASVASA. N62, N212, and N253 each carry an N-linked (GlcNAc...) asparagine glycan. The active site involves D281. N-linked (GlcNAc...) asparagine glycans are attached at residues N316, N323, N355, N524, N543, N565, N669, and N713. The disordered stretch occupies residues 735-754; the sequence is PEGATDGSPQPRLPASGGPG.

This sequence belongs to the glycosyl hydrolase 3 family.

Its subcellular location is the secreted. It catalyses the reaction Hydrolysis of terminal, non-reducing beta-D-glucosyl residues with release of beta-D-glucose.. It participates in glycan metabolism; cellulose degradation. Functionally, beta-glucosidases are one of a number of cellulolytic enzymes involved in the degradation of cellulosic biomass. Catalyzes the last step releasing glucose from the inhibitory cellobiose. In Aspergillus terreus, this protein is Probable beta-glucosidase A (bglA).